The chain runs to 410 residues: Multifunctional CCA protein (410 aa).

Positions 8 and 11 each coordinate ATP. G8 and R11 together coordinate CTP. E21 and D23 together coordinate Mg(2+). Positions 91, 137, and 140 each coordinate ATP. Positions 91, 137, and 140 each coordinate CTP. The HD domain maps to 228 to 329 (TGIHSLMTLR…VKLLEQVDAF (102 aa)).

Belongs to the tRNA nucleotidyltransferase/poly(A) polymerase family. Bacterial CCA-adding enzyme type 1 subfamily. As to quaternary structure, monomer. Can also form homodimers and oligomers. Requires Mg(2+) as cofactor. Ni(2+) serves as cofactor.

It carries out the reaction a tRNA precursor + 2 CTP + ATP = a tRNA with a 3' CCA end + 3 diphosphate. It catalyses the reaction a tRNA with a 3' CCA end + 2 CTP + ATP = a tRNA with a 3' CCACCA end + 3 diphosphate. Functionally, catalyzes the addition and repair of the essential 3'-terminal CCA sequence in tRNAs without using a nucleic acid template. Adds these three nucleotides in the order of C, C, and A to the tRNA nucleotide-73, using CTP and ATP as substrates and producing inorganic pyrophosphate. tRNA 3'-terminal CCA addition is required both for tRNA processing and repair. Also involved in tRNA surveillance by mediating tandem CCA addition to generate a CCACCA at the 3' terminus of unstable tRNAs. While stable tRNAs receive only 3'-terminal CCA, unstable tRNAs are marked with CCACCA and rapidly degraded. This chain is Multifunctional CCA protein, found in Legionella pneumophila (strain Lens).